A 529-amino-acid polypeptide reads, in one-letter code: MTSSRLWFSLLLAAAFAGRATALWPWPQNFQTSDQRYVLYPNNFQFQYDVSSAAQPGCSVLDEAFQRYRDLLFGSGSWPRPYLTGKRHTLEKNVLVVSVVTPGCNQLPTLESVENYTLTINDDQCLLLSETVWGALRGLETFSQLVWKSAEGTFFINKTEIEDFPRFPHRGLLLDTSRHYLPLSSILDTLDVMAYNKLNVFHWHLVDDPSFPYESFTFPELMRKGSYNPVTHIYTAQDVKEVIEYARLRGIRVLAEFDTPGHTLSWGPGIPGLLTPCYSGSEPSGTFGPVNPSLNNTYEFMSTFFLEVSSVFPDFYLHLGGDEVDFTCWKSNPEIQDFMRKKGFGEDFKQLESFYIQTLLDIVSSYGKGYVVWQEVFDNKVKIQPDTIIQVWREDIPVNYMKELELVTKAGFRALLSAPWYLNRISYGPDWKDFYIVEPLAFEGTPEQKALVIGGEACMWGEYVDNTNLVPRLWPRAGAVAERLWSNKLTSDLTFAYERLSHFRCELLRRGVQAQPLNVGFCEQEFEQT.

The N-terminal stretch at 1 to 22 (MTSSRLWFSLLLAAAFAGRATA) is a signal peptide. Residues 23–88 (LWPWPQNFQT…PRPYLTGKRH (66 aa)) constitute a propeptide that is removed on maturation. A disulfide bridge connects residues C58 and C104. N-linked (GlcNAc...) asparagine glycosylation is found at N115, N157, and N295. A disulfide bridge links C277 with C328. The active-site Proton donor is E323. Residues 423–424 (NR) are critical for hydrolysis GM2 gangliosides. A disulfide bridge connects residues C505 and C522.

The protein belongs to the glycosyl hydrolase 20 family. As to quaternary structure, there are 3 beta-hexosaminidase isozymes: isozyme A (hexosaminidase A) is a heterodimer composed of one subunit alpha and one subunit beta (chain A and B); isozyme B (hexosaminidase B) is a homodimer of two beta subunits (two chains A and B); isozyme S (hexosaminidase S) is a homodimer of two alpha subunits. The composition of the dimer (isozyme A versus isozyme S) has a significant effect on the substrate specificity of the alpha subunit active site. N-linked glycan at Asn-115 consists of Man(3)-GlcNAc(2). N-linked glycan at Asn-157 consists of either GlcNAc or GlcNAc(2)-Man(7-9). N-linked glycan at Asn-295 consists of either GlcNAc, GlcNAc-Fuc, or GlcNAc(2)-Man(4).

It localises to the lysosome. It carries out the reaction Hydrolysis of terminal non-reducing N-acetyl-D-hexosamine residues in N-acetyl-beta-D-hexosaminides.. The catalysed reaction is N-acetyl-beta-D-galactosaminyl-(1-&gt;4)-beta-D-3-sulfogalactosyl-(1-&gt;4)-beta-D-glucosyl-(1&lt;-&gt;1')-ceramide + H2O = a beta-D-3-sulfogalactosyl-(1-&gt;4)-beta-D-glucosyl-(1&lt;-&gt;1')-ceramide + N-acetyl-beta-D-galactosamine. The enzyme catalyses a ganglioside GM2 (d18:1(4E)) + H2O = a ganglioside GM3 (d18:1(4E)) + N-acetyl-beta-D-galactosamine. It catalyses the reaction a ganglioside GM2 + H2O = a ganglioside GM3 + N-acetyl-beta-D-galactosamine. It carries out the reaction beta-D-GalNAc-(1-&gt;4)-alpha-L-IdoA-(1-&gt;3)-beta-D-GalNAc-4-sulfate-(1-&gt;4)-alpha-L-IdoA-(1-&gt;3)-D-GalNAc-4-sulfate + H2O = alpha-L-IdoA-(1-&gt;3)-beta-D-GalNAc-4-sulfate-(1-&gt;4)-alpha-L-IdoA-(1-&gt;3)-D-GalNAc-4-sulfate + N-acetyl-D-galactosamine. The catalysed reaction is N-acetyl-beta-D-6-sulfogalactosaminyl-(1-&gt;4)-alpha-L-iduronyl-(1-&gt;3)-N-acetyl-D-6-sulfogalactosamine + H2O = alpha-L-iduronyl-(1-&gt;3)-N-acetyl-D-6-sulfogalactosamine + N-acetyl-D-6-sulfogalactosamine. With respect to regulation, addition of GM2A stimulates the hydrolysis of sulfated glycosphingolipid SM2 and the ganglioside GM2. In terms of biological role, hydrolyzes the non-reducing end N-acetyl-D-hexosamine and/or sulfated N-acetyl-D-hexosamine of glycoconjugates, such as the oligosaccharide moieties from proteins and neutral glycolipids, or from certain mucopolysaccharides. The isozyme S is as active as the isozyme A on the anionic bis-sulfated glycans, the chondroitin-6-sulfate trisaccharide (C6S-3), and the dermatan sulfate pentasaccharide, and the sulfated glycosphingolipid SM2. The isozyme B does not hydrolyze each of these substrates, however hydrolyzes efficiently neutral oligosaccharide. Only the isozyme A is responsible for the degradation of GM2 gangliosides in the presence of GM2A. This Homo sapiens (Human) protein is Beta-hexosaminidase subunit alpha.